Here is a 440-residue protein sequence, read N- to C-terminus: MKLWGGRFKEEESKLMEDFNSSLSFDKKLYYEDIKGSIAHVKMLANQNIIKEEEKEKILLGLEEILKEIDEGILKIEGDYEDIHSFVEINLINKIGNVGKKLHTGRSRNDQVALDMKLYAKKSTEEVIECLKELMDSLIKVGNENNYIMPGYTHLQRAQVVTFRYHLLAYFEMFKRDEKRLENALEFLNESPLGSGALAGSTYNIDREYTAKLLGFRKPVDNFLDGVSDRDYIIELISKFSIIMMHLSRLSEELILWSSSEFRFIQIGDAYSTGSSIMPQKKNPDGAELIRGKIGRVYGDLISILTVMKSLPLAYNKDMQEDKEPFFDAKDTVISCLKVMEGIISTLKVNKENLMKSVKKGFLNATEAADYLVNKGMAFRDAHKVIGEVVIYCEDKNSAIEDLSLEELKQFSDLFCEDIYEFIDYKNSINKGIKKEMGYF.

This sequence belongs to the lyase 1 family. Argininosuccinate lyase subfamily.

The protein resides in the cytoplasm. The catalysed reaction is 2-(N(omega)-L-arginino)succinate = fumarate + L-arginine. The protein operates within amino-acid biosynthesis; L-arginine biosynthesis; L-arginine from L-ornithine and carbamoyl phosphate: step 3/3. This Clostridium botulinum (strain 657 / Type Ba4) protein is Argininosuccinate lyase.